Consider the following 281-residue polypeptide: Survival motor neuron protein 1 (281 aa).

Disordered regions lie at residues 1 to 20 (MANGAEDVVFCRGTGQSDDS) and 42 to 77 (ALKGEDGATPQENDNPGKKRKNNKKNKSRKRCNAAP). At threonine 14 the chain carries Phosphothreonine. Phosphoserine occurs at positions 17 and 20. The segment covering 59–73 (KKRKNNKKNKSRKRC) has biased composition (basic residues). In terms of domain architecture, Tudor spans 80–140 (EWQVGDSCYA…LTEPPDMDED (61 aa)). A compositionally biased stretch (basic and acidic residues) spans 145 to 159 (ANVKETESSTEESDR). The segment at 145–242 (ANVKETESST…PMSPDFGEDD (98 aa)) is disordered. Composition is skewed to pro residues over residues 179-197 (MGPPSWFPSFPPGPPPPPP) and 212-235 (PSFPGWPPMIPLGPPMIPPPPPMS). The P2 (binding site for SNRPB) stretch occupies residues 225–252 (PPMIPPPPPMSPDFGEDDEALGSMLISW). Residues 264–279 (GLRQGRKEAAASKKSH) are required for interaction with SYNCRIP.

It belongs to the SMN family. As to quaternary structure, homodimer. Component of an import snRNP complex composed of kpnb1, rnut1, smn1 and znf259. Part of the core SMN complex that contains smn1, gemin2/sip1, ddx20/gemin3, gemin4, gemin5, gemin6, gemin7, gemin8 and strap/unrip. Interacts with ddx20, fbl, nola1, rnut1, syncrip and with several spliceosomal snRNP core Sm proteins, including snrpb, snrpd1, snrpd2, snrpd3, snrpe and ilf3. Interacts with elavl4.

It localises to the nucleus. The protein resides in the gem. Its subcellular location is the cajal body. The protein localises to the cytoplasm. It is found in the cytoplasmic granule. It localises to the perikaryon. The protein resides in the cell projection. Its subcellular location is the neuron projection. The protein localises to the myofibril. It is found in the sarcomere. It localises to the z line. Functionally, the SMN complex plays an essential role in spliceosomal snRNP assembly in the cytoplasm and is required for pre-mRNA splicing in the nucleus. It may also play a role in the metabolism of snoRNPs. Required in motor neurons and proprioceptive neurons to ensure correct U12 intron splicing and proper levels of tmem41b mRNA. Required for the maturation of motor neuron axonal branches and dendrites. The chain is Survival motor neuron protein 1 (smn1) from Danio rerio (Zebrafish).